We begin with the raw amino-acid sequence, 271 residues long: 4-hydroxy-tetrahydrodipicolinate reductase (271 aa).

8–13 contacts NAD(+); sequence GITGRM. An NADP(+)-binding site is contributed by R35. NAD(+) is bound by residues 100–102 and 124–127; these read GST and APNM. The active-site Proton donor/acceptor is H157. (S)-2,3,4,5-tetrahydrodipicolinate is bound at residue H158. K161 acts as the Proton donor in catalysis. 167–168 contacts (S)-2,3,4,5-tetrahydrodipicolinate; it reads GT.

The protein belongs to the DapB family.

Its subcellular location is the cytoplasm. It catalyses the reaction (S)-2,3,4,5-tetrahydrodipicolinate + NAD(+) + H2O = (2S,4S)-4-hydroxy-2,3,4,5-tetrahydrodipicolinate + NADH + H(+). It carries out the reaction (S)-2,3,4,5-tetrahydrodipicolinate + NADP(+) + H2O = (2S,4S)-4-hydroxy-2,3,4,5-tetrahydrodipicolinate + NADPH + H(+). It participates in amino-acid biosynthesis; L-lysine biosynthesis via DAP pathway; (S)-tetrahydrodipicolinate from L-aspartate: step 4/4. In terms of biological role, catalyzes the conversion of 4-hydroxy-tetrahydrodipicolinate (HTPA) to tetrahydrodipicolinate. This is 4-hydroxy-tetrahydrodipicolinate reductase from Myxococcus xanthus (strain DK1622).